A 106-amino-acid polypeptide reads, in one-letter code: ATP-dependent Clp protease adapter protein ClpS (106 aa).

This sequence belongs to the ClpS family. As to quaternary structure, binds to the N-terminal domain of the chaperone ClpA.

In terms of biological role, involved in the modulation of the specificity of the ClpAP-mediated ATP-dependent protein degradation. The polypeptide is ATP-dependent Clp protease adapter protein ClpS (Citrobacter koseri (strain ATCC BAA-895 / CDC 4225-83 / SGSC4696)).